The following is a 118-amino-acid chain: Small ribosomal subunit protein uS13 (118 aa).

The disordered stretch occupies residues 94-118; that stretch reads SLPLRGQRTKTNARTRKGPRKPIRK.

It belongs to the universal ribosomal protein uS13 family. In terms of assembly, part of the 30S ribosomal subunit. Forms a loose heterodimer with protein S19. Forms two bridges to the 50S subunit in the 70S ribosome.

Located at the top of the head of the 30S subunit, it contacts several helices of the 16S rRNA. In the 70S ribosome it contacts the 23S rRNA (bridge B1a) and protein L5 of the 50S subunit (bridge B1b), connecting the 2 subunits; these bridges are implicated in subunit movement. Contacts the tRNAs in the A and P-sites. In Shewanella woodyi (strain ATCC 51908 / MS32), this protein is Small ribosomal subunit protein uS13.